We begin with the raw amino-acid sequence, 126 residues long: Holo-[acyl-carrier-protein] synthase (126 aa).

Residues Asp9 and Glu57 each contribute to the Mg(2+) site.

Belongs to the P-Pant transferase superfamily. AcpS family. Mg(2+) is required as a cofactor.

The protein localises to the cytoplasm. The enzyme catalyses apo-[ACP] + CoA = holo-[ACP] + adenosine 3',5'-bisphosphate + H(+). Transfers the 4'-phosphopantetheine moiety from coenzyme A to a Ser of acyl-carrier-protein. This is Holo-[acyl-carrier-protein] synthase from Alteromonas mediterranea (strain DSM 17117 / CIP 110805 / LMG 28347 / Deep ecotype).